Reading from the N-terminus, the 483-residue chain is Macrophage receptor MARCO (483 aa).

The Cytoplasmic segment spans residues 1–48; the sequence is MGNKKALKEEAFLGSAEEGADFDQAMFPVMETFEINDPMPKKRNWGSF. A helical; Signal-anchor for type II membrane protein transmembrane segment spans residues 49–69; the sequence is CTAVMAIHLILLTAGTTLLTL. At 70 to 483 the chain is on the extracellular side; sequence KVLSLQKWIL…HNEDAGVECR (414 aa). 2 N-linked (GlcNAc...) asparagine glycosylation sites follow: Asn-85 and Asn-137. The tract at residues 146–386 is disordered; that stretch reads RIKGERGSPG…GEKGEKGQSF (241 aa). The Collagen-like domain maps to 148–383; that stretch reads KGERGSPGIP…GQKGEKGEKG (236 aa). Positions 153–166 are enriched in low complexity; that stretch reads SPGIPGLQGPPGIK. Basic and acidic residues predominate over residues 193–216; it reads KGSKGDKGLIGPKGEHGTKGDKGD. Residues 273–286 are compositionally biased toward low complexity; that stretch reads VPGTPGAAGPSGAK. Over residues 376–386 the composition is skewed to basic and acidic residues; that stretch reads KGEKGEKGQSF. Residues 389–483 enclose the SRCR domain; that stretch reads VRIVGGTNRG…HNEDAGVECR (95 aa). Cystine bridges form between Cys-412/Cys-472, Cys-425/Cys-482, and Cys-452/Cys-462.

As to quaternary structure, homotrimer; disulfide-linked. Trimers may assemble in larger oligomers thus resulting in the creation of a large surface capable of interacting with very large ligands. N-glycosylated. In terms of tissue distribution, expressed in alveolar macrophages, macrophages of lymph node sinues, and Kupffer cells in liver (at protein level).

It is found in the cell membrane. Functionally, pattern recognition receptor (PRR) which binds Gram-positive and Gram-negative bacteria. Also plays a role in binding of unopsonized particles by alveolar macrophages. Binds to the secretoglobin SCGB3A2. The polypeptide is Macrophage receptor MARCO (MARCO) (Mesocricetus auratus (Golden hamster)).